Consider the following 102-residue polypeptide: Large ribosomal subunit protein bL21 (102 aa).

This sequence belongs to the bacterial ribosomal protein bL21 family. Part of the 50S ribosomal subunit. Contacts protein L20.

Functionally, this protein binds to 23S rRNA in the presence of protein L20. The chain is Large ribosomal subunit protein bL21 from Oceanobacillus iheyensis (strain DSM 14371 / CIP 107618 / JCM 11309 / KCTC 3954 / HTE831).